Here is a 471-residue protein sequence, read N- to C-terminus: Cysteine--tRNA ligase (471 aa).

Cysteine 29 contacts Zn(2+). A 'HIGH' region motif is present at residues 31-41 (LTVQSEPHVGH). 3 residues coordinate Zn(2+): cysteine 215, histidine 240, and glutamate 244. Positions 271–275 (KMSKS) match the 'KMSKS' region motif. Lysine 274 lines the ATP pocket.

This sequence belongs to the class-I aminoacyl-tRNA synthetase family. Monomer. It depends on Zn(2+) as a cofactor.

It is found in the cytoplasm. It carries out the reaction tRNA(Cys) + L-cysteine + ATP = L-cysteinyl-tRNA(Cys) + AMP + diphosphate. In Nocardioides sp. (strain ATCC BAA-499 / JS614), this protein is Cysteine--tRNA ligase.